The primary structure comprises 1417 residues: DNA-directed RNA polymerase subunit beta' (1417 aa).

Residues Cys-71, Cys-73, Cys-86, and Cys-89 each coordinate Zn(2+). Positions 461, 463, and 465 each coordinate Mg(2+). Residues Cys-815, Cys-889, Cys-896, and Cys-899 each coordinate Zn(2+).

It belongs to the RNA polymerase beta' chain family. As to quaternary structure, the RNAP catalytic core consists of 2 alpha, 1 beta, 1 beta' and 1 omega subunit. When a sigma factor is associated with the core the holoenzyme is formed, which can initiate transcription. Mg(2+) is required as a cofactor. It depends on Zn(2+) as a cofactor.

It carries out the reaction RNA(n) + a ribonucleoside 5'-triphosphate = RNA(n+1) + diphosphate. Its function is as follows. DNA-dependent RNA polymerase catalyzes the transcription of DNA into RNA using the four ribonucleoside triphosphates as substrates. The protein is DNA-directed RNA polymerase subunit beta' of Pasteurella multocida (strain Pm70).